Reading from the N-terminus, the 232-residue chain is Dehydrogenase OXI1 (232 aa).

A signal peptide spans 1-20 (MTETFKVAITFVSPSSEALA). An NADP(+)-binding site is contributed by Leu19. An N-linked (GlcNAc...) asparagine glycan is attached at Asn28. NADP(+) is bound by residues Asp42, Asn70, and Lys103. Asn117 carries N-linked (GlcNAc...) asparagine glycosylation. Catalysis depends on proton donor residues Ser119 and Ser121. Residues Tyr133, Lys137, and Thr168 each contribute to the NADP(+) site. The active-site Proton acceptor is the Tyr133. Lys137 serves as the catalytic Lowers pKa of active site Tyr.

The protein belongs to the short-chain dehydrogenases/reductases (SDR) family.

The enzyme catalyses a primary alcohol + NAD(+) = an aldehyde + NADH + H(+). It catalyses the reaction a secondary alcohol + NAD(+) = a ketone + NADH + H(+). It functions in the pathway mycotoxin biosynthesis. Functionally, dehydrogenase; part of the Tox1A locus, one of the 2 loci that mediate the biosynthesis of T-toxin, a family of linear polyketides 37 to 45 carbons in length, of which the major component is 41 carbons, and which leads to high virulence to maize. One of the PKSs (PKS1 or PKS2) could synthesize a precursor, used subsequently by the other PKS as starter unit, to add additional carbons. Variability in the length of the final carbon backbone C35-47 could be achieved by varying the number of condensation cycles, or use of different starter or extender units or might be due to decarboxylation of the penultimate product, catalyzed by DEC1. Additional proteins are required for the biosynthesis of T-toxin, including oxidoreductases RED1, RED2, RED3, LAM1 and OXI1, as well as esterase TOX9. This chain is Dehydrogenase OXI1, found in Cochliobolus heterostrophus (strain C4 / ATCC 48331 / race T) (Southern corn leaf blight fungus).